The sequence spans 294 residues: uncharacterized protein (294 aa).

Disordered regions lie at residues 25–59 and 77–141; these read VQVYRPVGQGAKRRINSEESDVSEDGNSKPKRVRR and LKDD…FEAP. Positions 86–139 are enriched in acidic residues; the sequence is YEELEDDDDDESIEEESDSEFEGESSSDEEESSYDSDSDYDSETEPEDSDDDFE. The stretch at 201–234 forms a coiled coil; that stretch reads IKFYKRNTTFTEEELAEIEEDLLAEVKARYNNMK. Over residues 242–259 the composition is skewed to basic and acidic residues; the sequence is TIETTEDDKKAGEVNKYD. Positions 242-294 are disordered; that stretch reads TIETTEDDKKAGEVNKYDIDDDFIEKTESDEEEEITEDDSSEQETVVVEPVDE. Residues 260–283 are compositionally biased toward acidic residues; it reads IDDDFIEKTESDEEEEITEDDSSE.

This is an uncharacterized protein from Magallana gigas (Pacific oyster).